The chain runs to 480 residues: Glutamyl-tRNA(Gln) amidotransferase subunit A (480 aa).

Catalysis depends on charge relay system residues K74 and S149. S173 (acyl-ester intermediate) is an active-site residue.

Belongs to the amidase family. GatA subfamily. In terms of assembly, heterotrimer of A, B and C subunits.

The catalysed reaction is L-glutamyl-tRNA(Gln) + L-glutamine + ATP + H2O = L-glutaminyl-tRNA(Gln) + L-glutamate + ADP + phosphate + H(+). Its function is as follows. Allows the formation of correctly charged Gln-tRNA(Gln) through the transamidation of misacylated Glu-tRNA(Gln) in organisms which lack glutaminyl-tRNA synthetase. The reaction takes place in the presence of glutamine and ATP through an activated gamma-phospho-Glu-tRNA(Gln). The protein is Glutamyl-tRNA(Gln) amidotransferase subunit A of Prochlorococcus marinus (strain MIT 9312).